A 288-amino-acid polypeptide reads, in one-letter code: Homoserine kinase (288 aa).

79 to 89 is a binding site for ATP; it reads PPARGLGSSSA.

Belongs to the GHMP kinase family. Homoserine kinase subfamily.

The protein localises to the cytoplasm. The enzyme catalyses L-homoserine + ATP = O-phospho-L-homoserine + ADP + H(+). The protein operates within amino-acid biosynthesis; L-threonine biosynthesis; L-threonine from L-aspartate: step 4/5. Its function is as follows. Catalyzes the ATP-dependent phosphorylation of L-homoserine to L-homoserine phosphate. This Listeria innocua serovar 6a (strain ATCC BAA-680 / CLIP 11262) protein is Homoserine kinase.